We begin with the raw amino-acid sequence, 80 residues long: Putative membrane protein insertion efficiency factor (80 aa).

Residues 61–80 form a disordered region; it reads KTGKDPVPDHFSLKRNQEGE. Residues 62-80 are compositionally biased toward basic and acidic residues; that stretch reads TGKDPVPDHFSLKRNQEGE.

The protein belongs to the UPF0161 family.

The protein localises to the cell membrane. Could be involved in insertion of integral membrane proteins into the membrane. The sequence is that of Putative membrane protein insertion efficiency factor from Streptococcus pneumoniae (strain 70585).